We begin with the raw amino-acid sequence, 158 residues long: Anti-tumor lectin (158 aa).

Gln-1 is subject to Blocked amino end (Gln). The Galectin domain occupies 12–155 (TSVDLAAPVT…STVVEAVTYT (144 aa)). Asn-43, His-59, Arg-63, Asn-72, Arg-74, Trp-80, and Glu-83 together coordinate N-acetyl-alpha-neuraminyl-(2-&gt;3)-beta-D-galactosyl-(1-&gt;4)-beta-D-glucose.

In terms of assembly, homodimer. As to expression, detected in the fruiting body.

In terms of biological role, anti-tumor lectin with DNase activity. Inhibits the growth of several tumor cell lines in vitro. Induces lymphocyte infiltration and necrosis of tumor cells in a mouse tumor model. Induces apoptosis in HeLa cells. Binds N-acetylneuraminyl lactose (N-acetyl-alpha-neuraminyl-(2-&gt;3)-beta-D-galactosyl-(1-&gt;4)-beta-D-glucose). This Cyclocybe aegerita (Black poplar mushroom) protein is Anti-tumor lectin.